The chain runs to 88 residues: Small ribosomal subunit protein uS15 (88 aa).

Belongs to the universal ribosomal protein uS15 family. In terms of assembly, part of the 30S ribosomal subunit. Forms a bridge to the 50S subunit in the 70S ribosome, contacting the 23S rRNA.

In terms of biological role, one of the primary rRNA binding proteins, it binds directly to 16S rRNA where it helps nucleate assembly of the platform of the 30S subunit by binding and bridging several RNA helices of the 16S rRNA. Functionally, forms an intersubunit bridge (bridge B4) with the 23S rRNA of the 50S subunit in the ribosome. This chain is Small ribosomal subunit protein uS15, found in Acidovorax sp. (strain JS42).